The primary structure comprises 325 residues: Sulfite dehydrogenase subunit C (325 aa).

Helical transmembrane passes span 5–25, 43–63, 87–107, 126–146, 165–185, 186–206, 266–286, and 290–310; these read FSVIFLTTLLGAGQGLYLAMV, FYAVGSLVALLLLIAGLGASF, EVIVLPIVMALVFAYGVAHWF, LLLGVLGTIASLALFVCTAMI, FLFLGAASGFMLAAAYSAYIG, NPLVTFYGTWAVILTLVGLAS, VYLVLVFPIPVLLIGLSYLIG, and LPIIAFFVQFAGLLIERWSFF.

It belongs to the DmsC family. As to quaternary structure, forms a heterotrimeric membrane-bound complex composed of a catalytic heterodimer (SoeAB) and a membrane anchor protein (SoeC).

The protein resides in the cell inner membrane. Functionally, part of the SoeABC complex that catalyzes the oxidation of sulfite to sulfate. SoeC probably anchors and stabilizes the catalytic subunits. This Allochromatium vinosum (strain ATCC 17899 / DSM 180 / NBRC 103801 / NCIMB 10441 / D) (Chromatium vinosum) protein is Sulfite dehydrogenase subunit C.